We begin with the raw amino-acid sequence, 98 residues long: NADH-ubiquinone oxidoreductase chain 4L (98 aa).

The next 3 helical transmembrane spans lie at 1–21, 29–49, and 61–81; these read MSLVYMNIMTAFMVSLAGLLM, SLLCLEGMMLSLFVMATLTIL, and IILLVFAACEAALGLSLLVMV.

This sequence belongs to the complex I subunit 4L family. Core subunit of respiratory chain NADH dehydrogenase (Complex I) which is composed of 45 different subunits.

The protein localises to the mitochondrion inner membrane. The catalysed reaction is a ubiquinone + NADH + 5 H(+)(in) = a ubiquinol + NAD(+) + 4 H(+)(out). Its function is as follows. Core subunit of the mitochondrial membrane respiratory chain NADH dehydrogenase (Complex I) which catalyzes electron transfer from NADH through the respiratory chain, using ubiquinone as an electron acceptor. Part of the enzyme membrane arm which is embedded in the lipid bilayer and involved in proton translocation. This chain is NADH-ubiquinone oxidoreductase chain 4L (MT-ND4L), found in Rangifer tarandus (Reindeer).